The chain runs to 374 residues: Methylthioribose-1-phosphate isomerase (374 aa).

D251 (proton donor) is an active-site residue.

It belongs to the eIF-2B alpha/beta/delta subunits family. MtnA subfamily.

Its subcellular location is the cytoplasm. The protein resides in the nucleus. It catalyses the reaction 5-(methylsulfanyl)-alpha-D-ribose 1-phosphate = 5-(methylsulfanyl)-D-ribulose 1-phosphate. It participates in amino-acid biosynthesis; L-methionine biosynthesis via salvage pathway; L-methionine from S-methyl-5-thio-alpha-D-ribose 1-phosphate: step 1/6. Functionally, catalyzes the interconversion of methylthioribose-1-phosphate (MTR-1-P) into methylthioribulose-1-phosphate (MTRu-1-P). This Oryza sativa subsp. indica (Rice) protein is Methylthioribose-1-phosphate isomerase.